The primary structure comprises 454 residues: Venom prothrombin activator porpharin-D (454 aa).

Residues Met1–Ala20 form the signal peptide. The propeptide occupies Glu21–Arg40. The 46-residue stretch at Ser41–Asp86 folds into the Gla domain. Residues Glu46, Glu47, Glu54, Glu56, Glu59, Glu60, Glu65, Glu66, Glu69, and Glu75 each carry the 4-carboxyglutamate modification. Cys57 and Cys62 are joined by a disulfide. In terms of domain architecture, EGF-like 1; calcium-binding spans Asp86–Glu122. Cystine bridges form between Cys90–Cys101, Cys95–Cys110, Cys112–Cys121, Cys129–Cys140, Cys136–Cys149, Cys151–Cys164, Cys172–Cys316, Cys216–Cys221, Cys236–Cys252, Cys364–Cys378, and Cys389–Cys417. O-linked (Hex...) serine glycosylation is present at Ser92. The 36-residue stretch at Cys129 to Cys164 folds into the EGF-like 2 domain. Positions Arg182–Arg209 are cleaved as a propeptide — activation peptide. The 232-residue stretch at Ile210–Arg441 folds into the Peptidase S1 domain. Catalysis depends on charge relay system residues His251 and Asp296. Ser393 acts as the Charge relay system in catalysis.

Belongs to the peptidase S1 family. Snake venom subfamily. Heterodimer of a light chain and a heavy chain; disulfide-linked. The vitamin K-dependent, enzymatic carboxylation of some glutamate residues allows the modified protein to bind calcium. As to expression, expressed by the venom gland.

Its subcellular location is the secreted. It carries out the reaction Selective cleavage of Arg-|-Thr and then Arg-|-Ile bonds in prothrombin to form thrombin.. Snake prothrombin activator that attacks the hemostatic system of prey. This protein is functionally similar to blood coagulation factor Xa. This Pseudechis porphyriacus (Red-bellied black snake) protein is Venom prothrombin activator porpharin-D.